The primary structure comprises 327 residues: Malate dehydrogenase (327 aa).

An NAD(+)-binding site is contributed by 11–17 (GAAGQIS). Residues Arg-92 and Arg-98 each contribute to the substrate site. NAD(+) is bound by residues Asn-105, Gln-112, and 129–131 (VGN). The substrate site is built by Asn-131 and Arg-162. His-187 acts as the Proton acceptor in catalysis.

It belongs to the LDH/MDH superfamily. MDH type 2 family.

The enzyme catalyses (S)-malate + NAD(+) = oxaloacetate + NADH + H(+). In terms of biological role, catalyzes the reversible oxidation of malate to oxaloacetate. The sequence is that of Malate dehydrogenase from Cellvibrio japonicus (strain Ueda107) (Pseudomonas fluorescens subsp. cellulosa).